Consider the following 290-residue polypeptide: 4-diphosphocytidyl-2-C-methyl-D-erythritol kinase (290 aa).

Lys-8 is a catalytic residue. 92 to 102 (PISAGLAGGST) provides a ligand contact to ATP. Residue Asp-134 is part of the active site.

Belongs to the GHMP kinase family. IspE subfamily.

The catalysed reaction is 4-CDP-2-C-methyl-D-erythritol + ATP = 4-CDP-2-C-methyl-D-erythritol 2-phosphate + ADP + H(+). It functions in the pathway isoprenoid biosynthesis; isopentenyl diphosphate biosynthesis via DXP pathway; isopentenyl diphosphate from 1-deoxy-D-xylulose 5-phosphate: step 3/6. Catalyzes the phosphorylation of the position 2 hydroxy group of 4-diphosphocytidyl-2C-methyl-D-erythritol. The polypeptide is 4-diphosphocytidyl-2-C-methyl-D-erythritol kinase (Caldicellulosiruptor saccharolyticus (strain ATCC 43494 / DSM 8903 / Tp8T 6331)).